An 82-amino-acid chain; its full sequence is Antitoxin MazE2 (82 aa).

As to quaternary structure, probably forms a complex with cognate toxin MazF2.

In terms of biological role, antitoxin component of a type II toxin-antitoxin (TA) system. Labile antitoxin that binds to cognate MazF2 toxin and counteracts its endoribonuclease activity. The chain is Antitoxin MazE2 (mazE2) from Mycobacterium bovis (strain ATCC BAA-935 / AF2122/97).